A 566-amino-acid polypeptide reads, in one-letter code: Mucolipin-2 (566 aa).

Topologically, residues 1–65 (MPGDEETLDL…YRARRQIPWK (65 aa)) are cytoplasmic. The helical transmembrane segment at 66–86 (LGLQILKIVMVTTQLVRFGLS) threads the bilayer. Topologically, residues 87-288 (NQLVVAFKED…ISGSTQRSTH (202 aa)) are extracellular. Residues 107-123 (KGFSGVDEDDYSCSIYT) form an extracellular/lumenal pore loop region. 2 disulfide bridges follow: Cys164–Cys190 and Cys243–Cys274. Residues 289 to 309 (YLLVFDVFVIMICLASLILCT) form a helical membrane-spanning segment. Residues 310-346 (RSIVLALRLRKRFLNFFLEKYKQRVCGADQWEFVNGW) are Cytoplasmic-facing. The chain crosses the membrane as a helical span at residues 347 to 367 (YVLVTISDLMTIIGSILKMEI). The Extracellular segment spans residues 368-376 (KAKKLTNYD). Residues 377 to 397 (VCSILLGTSTLFVWVGVIRYL) traverse the membrane as a helical segment. Residues 398-419 (GYFQTYNVLILTMQASLPKVLR) are Cytoplasmic-facing. A helical membrane pass occupies residues 420 to 440 (FCACAGMIYLGYTFCGWIVLG). The Extracellular portion of the chain corresponds to 441-448 (PYHEKFEN). The segment at residues 449 to 469 (LNIVAECLFSLVNGDDMFATF) is an intramembrane region (pore-forming). Positions 461 to 464 (NGDD) match the Selectivity filter motif. Residues 470-480 (AQIQQKSILVW) lie on the Extracellular side of the membrane. The chain crosses the membrane as a helical span at residues 481–502 (LFSRLYLYSFISLFIYMVLSLF). The Cytoplasmic segment spans residues 503–566 (IALITDSYHT…RSNDHLILID (64 aa)).

It belongs to the transient receptor (TC 1.A.4) family. Polycystin subfamily. MCOLN2 sub-subfamily. In terms of assembly, forms homooligomeric complexes; probably tetrameric. Can heterooligomerize with MCOLN1; heteromeric assemblies have different channel properties as compared to the respective homooligomers and may be tissue-specific. Interacts with TMEM176A. In terms of tissue distribution, expressed in activated macrophages and microglia (at protein level). As to expression, isoform 1 is widely expressed at very low levels. Isoform 2 is expressed at high levels in lymphoid tissues (thymus and spleen) and kidney, and at moderate levels in heart, lung, liver and stomach.

The protein localises to the cell membrane. Its subcellular location is the lysosome membrane. It is found in the recycling endosome membrane. The enzyme catalyses Ca(2+)(in) = Ca(2+)(out). It carries out the reaction Fe(2+)(in) = Fe(2+)(out). Fe(2+) channel activity is potentiated by low pH. Functionally, nonselective cation channel probably playing a role in the regulation of membrane trafficking events. Acts as a Ca(2+)-permeable cation channel with inwardly rectifying activity. May activate ARF6 and be involved in the trafficking of GPI-anchored cargo proteins to the cell surface via the ARF6-regulated recycling pathway. May play a role in immune processes. In adaptive immunity, TRPML2 and TRPML1 may play redundant roles in the function of the specialized lysosomes of B cells. In the innate immune response, may play a role in the regulation of chemokine secretion and macrophage migration. Through a possible and probably tissue-specific heteromerization with MCOLN1 may be at least in part involved in many lysosome-dependent cellular events. Also functions as a Fe(2+) permeable channel. This Mus musculus (Mouse) protein is Mucolipin-2 (Mcoln2).